Consider the following 362-residue polypeptide: Serine/threonine-protein kinase SRK2D (362 aa).

The Protein kinase domain maps to 23–279 (YDFVKDIGSG…IPEITSDKWF (257 aa)). Residues 29 to 37 (IGSGNFGVA) and K52 contribute to the ATP site. The active-site Proton acceptor is D142.

This sequence belongs to the protein kinase superfamily. Ser/Thr protein kinase family. Interacts with ABI1. Interacts with I-2, TOPP1 and TOPP2. Interacts with FREE1 (via C-terminus). In terms of tissue distribution, expressed in seeds, seedlings, roots (especially in tips), stems, leaves, shoots, flowers and siliques.

The catalysed reaction is L-seryl-[protein] + ATP = O-phospho-L-seryl-[protein] + ADP + H(+). It catalyses the reaction L-threonyl-[protein] + ATP = O-phospho-L-threonyl-[protein] + ADP + H(+). Together with SRK2I, key component and activator of the abscisic acid (ABA) signaling pathway that regulates numerous ABA responses, such as seed germination, Pro accumulation, root growth inhibition, dormancy and seedling growth, and, to a lesser extent, stomatal closure. In response to ABA, phosphorylates the ESCRT-I complex component FREE1, which is required for ABA-induced FREE1 nuclear import. This is Serine/threonine-protein kinase SRK2D (SRK2D) from Arabidopsis thaliana (Mouse-ear cress).